We begin with the raw amino-acid sequence, 169 residues long: Cell cycle link protein (169 aa).

Residues 9 to 22 form a binding to host SKP1 protein region; sequence LPEELREKIVHDHL. Positions 110-114 match the LXCXE motif, interaction with host RBR motif; it reads LSCRE.

The protein belongs to the nanovirus Clink protein family. As to quaternary structure, interacts with host SKP1. Interacts (via LXCXE domain) with host retinoblastoma-related protein 1 (RBR1). Interacts (via LXCXE domain) with retinoblastoma-related proteins (RBR).

Interacts with and disrupts the function of host retinoblastoma-related proteins RBR, which are key regulators of the cell cycle. Induces transcriptional activation of E2F-regulated S-phase and G2/M-phase-specific genes. Inactivation of the ability of RBR to arrest the cell cycle leads to the stimulation of viral DNA replication. This chain is Cell cycle link protein (DNA-C), found in Faba bean necrotic yellows virus (isolate Egyptian EV1-93) (FBNYV).